We begin with the raw amino-acid sequence, 83 residues long: RNA-binding protein Hfq (83 aa).

Positions 10–69 (DPFLNALRREHVPVSIYLVNGIKLQGQIESFDQYVVLLRNTVTQMVYKHAISTIVPGRAV) constitute a Sm domain.

The protein belongs to the Hfq family. Homohexamer.

RNA chaperone that binds small regulatory RNA (sRNAs) and mRNAs to facilitate mRNA translational regulation in response to envelope stress, environmental stress and changes in metabolite concentrations. Also binds with high specificity to tRNAs. The chain is RNA-binding protein Hfq from Delftia acidovorans (strain DSM 14801 / SPH-1).